Reading from the N-terminus, the 251-residue chain is Diphthine synthase (251 aa).

Residues Leu9, Asp85, Val88, 113–114, Leu165, Ala202, and His227 contribute to the S-adenosyl-L-methionine site; that span reads SI.

The protein belongs to the diphthine synthase family. Homodimer.

The enzyme catalyses 2-[(3S)-amino-3-carboxypropyl]-L-histidyl-[translation elongation factor 2] + 3 S-adenosyl-L-methionine = diphthine-[translation elongation factor 2] + 3 S-adenosyl-L-homocysteine + 3 H(+). The protein operates within protein modification; peptidyl-diphthamide biosynthesis. S-adenosyl-L-methionine-dependent methyltransferase that catalyzes the trimethylation of the amino group of the modified target histidine residue in translation elongation factor 2 (EF-2), to form an intermediate called diphthine. The three successive methylation reactions represent the second step of diphthamide biosynthesis. The polypeptide is Diphthine synthase (Methanosphaerula palustris (strain ATCC BAA-1556 / DSM 19958 / E1-9c)).